A 250-amino-acid polypeptide reads, in one-letter code: 3-deoxy-manno-octulosonate cytidylyltransferase (250 aa).

It belongs to the KdsB family.

It is found in the cytoplasm. It carries out the reaction 3-deoxy-alpha-D-manno-oct-2-ulosonate + CTP = CMP-3-deoxy-beta-D-manno-octulosonate + diphosphate. It functions in the pathway nucleotide-sugar biosynthesis; CMP-3-deoxy-D-manno-octulosonate biosynthesis; CMP-3-deoxy-D-manno-octulosonate from 3-deoxy-D-manno-octulosonate and CTP: step 1/1. It participates in bacterial outer membrane biogenesis; lipopolysaccharide biosynthesis. Functionally, activates KDO (a required 8-carbon sugar) for incorporation into bacterial lipopolysaccharide in Gram-negative bacteria. In Francisella tularensis subsp. holarctica (strain FTNF002-00 / FTA), this protein is 3-deoxy-manno-octulosonate cytidylyltransferase.